We begin with the raw amino-acid sequence, 158 residues long: Phosphopantetheine adenylyltransferase (158 aa).

Position 10 (Ser10) interacts with substrate. ATP-binding positions include Ser10–Phe11 and His18. Residues Lys42, Leu74, and Arg88 each contribute to the substrate site. Residues Gly89–Arg91, Glu99, and Tyr124–Ser130 each bind ATP.

This sequence belongs to the bacterial CoaD family. As to quaternary structure, homohexamer. Requires Mg(2+) as cofactor.

The protein resides in the cytoplasm. It catalyses the reaction (R)-4'-phosphopantetheine + ATP + H(+) = 3'-dephospho-CoA + diphosphate. Its pathway is cofactor biosynthesis; coenzyme A biosynthesis; CoA from (R)-pantothenate: step 4/5. Its function is as follows. Reversibly transfers an adenylyl group from ATP to 4'-phosphopantetheine, yielding dephospho-CoA (dPCoA) and pyrophosphate. This chain is Phosphopantetheine adenylyltransferase, found in Vesicomyosocius okutanii subsp. Calyptogena okutanii (strain HA).